A 545-amino-acid chain; its full sequence is Glucose-6-phosphate isomerase (545 aa).

Glu-351 acts as the Proton donor in catalysis. Catalysis depends on residues His-382 and Lys-510.

It belongs to the GPI family.

The protein resides in the cytoplasm. It catalyses the reaction alpha-D-glucose 6-phosphate = beta-D-fructose 6-phosphate. Its pathway is carbohydrate biosynthesis; gluconeogenesis. It participates in carbohydrate degradation; glycolysis; D-glyceraldehyde 3-phosphate and glycerone phosphate from D-glucose: step 2/4. Functionally, catalyzes the reversible isomerization of glucose-6-phosphate to fructose-6-phosphate. In Helicobacter pylori (strain HPAG1), this protein is Glucose-6-phosphate isomerase.